A 332-amino-acid chain; its full sequence is Polygalacturonase inhibitor 1 (332 aa).

A signal peptide spans 1-24; it reads MASTASFMLAVLLAVAVAAAPARA. Intrachain disulfides connect C27–C58 and C59–C66. 10 LRR repeats span residues 72–96, 97–118, 119–142, 143–166, 167–192, 193–215, 216–236, 237–259, 260–283, and 284–310; these read VNNV…GLTA, LMSL…CLTA, LSNL…SLAR, IRSL…SFSD, LPNL…VQGQ, FRSL…AQDE, INTV…LFAA, GRPI…KLVF, PPEL…SLAA, and LSTL…VIRH. N131 carries an N-linked (GlcNAc...) asparagine glycan. 3 cysteine pairs are disulfide-bonded: C298/C312, C298/C320, and C320/C329.

This sequence belongs to the polygalacturonase-inhibiting protein family. Highly expressed in calli, immature and mature panicles, and in three inner floral organs: lodicules, stamens and carpels. Expressed at low level in seedling roots and mature stems.

It is found in the secreted. Its subcellular location is the cell wall. Functionally, inhibitor of fungal polygalacturonase. Regulates floral organ number. The chain is Polygalacturonase inhibitor 1 from Oryza sativa subsp. japonica (Rice).